The following is a 529-amino-acid chain: Low affinity inorganic phosphate transporter 4 (529 aa).

At 1–21 the chain is on the cytoplasmic side; sequence MASDNLVVLNALDTARTQWYH. Residues 22 to 42 traverse the membrane as a helical segment; sequence VTAVIIAGMGFFTDAYDLFCI. At 43–71 the chain is on the extracellular side; sequence STVSKLLGRLYYYDPSTKAPGKLPHMANN. A helical transmembrane segment spans residues 72-92; it reads WVIGVALVGTLSGQLVFGWLG. The Cytoplasmic segment spans residues 93 to 99; it reads DKLGRKK. Residues 100–120 form a helical membrane-spanning segment; the sequence is VYGLTLILMVICALCSGLSLG. Residues 121-125 lie on the Extracellular side of the membrane; that stretch reads YSPKS. A helical transmembrane segment spans residues 126–146; that stretch reads VIGTLCFFRFWLGFGIGGDYP. At 147 to 161 the chain is on the cytoplasmic side; it reads LSATIMSEYANKSTR. A helical membrane pass occupies residues 162–182; it reads GAFIAAVFAMQGVGIIFAGLV. The Extracellular portion of the chain corresponds to 183-211; it reads SMTISKVFLMNFEGKPFNVDEVLSTEPEA. A helical membrane pass occupies residues 212–232; the sequence is DYVWRIVLMLGALPALLTYYW. Over 233–291 the chain is Cytoplasmic; sequence RMKMPETGRYTAIIEGNAKQAAIDMGKVLDIEIQAEGDKLAQFKAANEYSLLSNEFFQR. Residues 292 to 312 traverse the membrane as a helical segment; the sequence is HGLHLIGTMSTWFLLDIAFYS. The Extracellular segment spans residues 313-344; the sequence is QNLTQKDIFPVMGLTSKANTISALREMFETSR. N-linked (GlcNAc...) asparagine glycosylation occurs at Asn-314. A helical transmembrane segment spans residues 345-365; that stretch reads AMFVIALFGTFPGYWFTVFFI. Residues 366–374 are Cytoplasmic-facing; it reads EKIGRFKIQ. The chain crosses the membrane as a helical span at residues 375–395; it reads LVGFFMMSVFMAIIGVKYDYL. At 396–405 the chain is on the extracellular side; sequence RNKEHKWTFA. Residues 406 to 426 traverse the membrane as a helical segment; the sequence is ALYGLTFFFANFGPNSTTFVL. The Cytoplasmic portion of the chain corresponds to 427–437; that stretch reads PAELFPTRVRS. Residues 438–458 traverse the membrane as a helical segment; the sequence is TCHALSAALGKAGAMISAFGI. Residues 459 to 471 are Extracellular-facing; the sequence is QQYTQDQDVRKIK. Residues 472–492 form a helical membrane-spanning segment; it reads TAMLLLAFTNMVGFCCTFLVT. Residues 493–529 lie on the Cytoplasmic side of the membrane; it reads ETKGRSLEEISGEDGRQNETQMKTTRPVSGHPDDGWE. The interval 501–529 is disordered; it reads EISGEDGRQNETQMKTTRPVSGHPDDGWE. Positions 510–519 are enriched in polar residues; sequence NETQMKTTRP.

This sequence belongs to the major facilitator superfamily. Phosphate:H(+) symporter (TC 2.A.1.9) family.

It is found in the cell membrane. The enzyme catalyses phosphate(in) + H(+)(in) = phosphate(out) + H(+)(out). Functionally, low-affinity transporter for external inorganic phosphate (Pi) probably involved in the acquisition of phosphate released by arbuscular mycorrhizal (AM) fungi (e.g. Rhizophagus irregularis and Glomus intraradices) during AM symbiosis. Acts as a Pi-sensing machinery at the root tip level, independently of AM fungi, involved in the regulation of early root branching and lateral roots formation. The chain is Low affinity inorganic phosphate transporter 4 from Petunia hybrida (Petunia).